The primary structure comprises 119 residues: MNLAAYYPVLLFLLVGTGLGIALVSIGKILGPNKPDSEKNAPYECGFEAFEDARMKFDVRYYLVAILFIIFDLETAFLFPWGVALREIGWPGFIAMMIFLLEFLLGFAYIWKKGGLDWE.

The next 3 helical transmembrane spans lie at 7–27, 63–83, and 88–108; these read YPVL…VSIG, LVAI…PWGV, and IGWP…LGFA.

The protein belongs to the complex I subunit 3 family. In terms of assembly, NDH-1 is composed of 14 different subunits. Subunits NuoA, H, J, K, L, M, N constitute the membrane sector of the complex.

It is found in the cell inner membrane. The enzyme catalyses a quinone + NADH + 5 H(+)(in) = a quinol + NAD(+) + 4 H(+)(out). Its function is as follows. NDH-1 shuttles electrons from NADH, via FMN and iron-sulfur (Fe-S) centers, to quinones in the respiratory chain. The immediate electron acceptor for the enzyme in this species is believed to be ubiquinone. Couples the redox reaction to proton translocation (for every two electrons transferred, four hydrogen ions are translocated across the cytoplasmic membrane), and thus conserves the redox energy in a proton gradient. The chain is NADH-quinone oxidoreductase subunit A from Burkholderia mallei (strain NCTC 10247).